We begin with the raw amino-acid sequence, 137 residues long: Large ribosomal subunit protein uL16 (137 aa).

Belongs to the universal ribosomal protein uL16 family. In terms of assembly, part of the 50S ribosomal subunit.

Its function is as follows. Binds 23S rRNA and is also seen to make contacts with the A and possibly P site tRNAs. The sequence is that of Large ribosomal subunit protein uL16 from Wolbachia pipientis wMel.